The following is a 107-amino-acid chain: YcgL domain-containing protein Psyc_0800 (107 aa).

Residues 1 to 95 (MHCDIYKFLK…QDVMRRQAEL (95 aa)) enclose the YcgL domain.

The protein is YcgL domain-containing protein Psyc_0800 of Psychrobacter arcticus (strain DSM 17307 / VKM B-2377 / 273-4).